We begin with the raw amino-acid sequence, 292 residues long: MQDLIKRTLPQDDALNQAIVNDLRSQNWAGFLNYSQVQQLCHNFELTTLKLAMHLLPLAASYSHTAISHFNVGAIAIGEQGDFYFGANQEFANSAIQQTIHAEQSAISHAWLRNERRISDMVVNYTPCGHCRQFMNELHGAEKISIHLPHSQNNPLHSYLPDAFGPKDLDIAAHLLAEENHDLVADHQDDLVNQAILAANQSHCPYSNSPHGIAILFKNSDVVTGRYAENAAFNPSLPALQTALNFAYLNDKKLSDIERIVMAEKALKLSHKTMAETLLSTLTSVELEYYSL.

2 CMP/dCMP-type deaminase domains span residues 47-167 (TTLK…FGPK) and 186-292 (DHQD…YYSL). A substrate-binding site is contributed by 88–90 (NQE). Histidine 101 contacts Zn(2+). Glutamate 103 serves as the catalytic Proton donor. 2 residues coordinate Zn(2+): cysteine 128 and cysteine 131.

The protein belongs to the cytidine and deoxycytidylate deaminase family. Homodimer. It depends on Zn(2+) as a cofactor.

It catalyses the reaction cytidine + H2O + H(+) = uridine + NH4(+). It carries out the reaction 2'-deoxycytidine + H2O + H(+) = 2'-deoxyuridine + NH4(+). Functionally, this enzyme scavenges exogenous and endogenous cytidine and 2'-deoxycytidine for UMP synthesis. In Haemophilus influenzae (strain ATCC 51907 / DSM 11121 / KW20 / Rd), this protein is Cytidine deaminase.